Reading from the N-terminus, the 338-residue chain is Lipoate-protein ligase A (338 aa).

Residues 29-216 (PATQRVLFLW…AFFAHYGERV (188 aa)) enclose the BPL/LPL catalytic domain. ATP-binding positions include Arg71, 76–79 (GAVF), and Lys134. Position 134 (Lys134) interacts with (R)-lipoate.

Belongs to the LplA family. Monomer.

It is found in the cytoplasm. It catalyses the reaction L-lysyl-[lipoyl-carrier protein] + (R)-lipoate + ATP = N(6)-[(R)-lipoyl]-L-lysyl-[lipoyl-carrier protein] + AMP + diphosphate + H(+). Its pathway is protein modification; protein lipoylation via exogenous pathway; protein N(6)-(lipoyl)lysine from lipoate: step 1/2. It participates in protein modification; protein lipoylation via exogenous pathway; protein N(6)-(lipoyl)lysine from lipoate: step 2/2. Its function is as follows. Catalyzes both the ATP-dependent activation of exogenously supplied lipoate to lipoyl-AMP and the transfer of the activated lipoyl onto the lipoyl domains of lipoate-dependent enzymes. The sequence is that of Lipoate-protein ligase A from Salmonella arizonae (strain ATCC BAA-731 / CDC346-86 / RSK2980).